Here is a 249-residue protein sequence, read N- to C-terminus: Transcriptional activator protein EsaR (249 aa).

The HTH luxR-type domain occupies 174 to 239 (QSADKTIFSS…QAIRLGVELD (66 aa)). The H-T-H motif DNA-binding region spans 198–217 (YAEIAAITGISVSTVKFHIK).

Belongs to the autoinducer-regulated transcriptional regulatory protein family.

In terms of biological role, functions as a potential OhlL-responsive transcriptional regulator. The sequence is that of Transcriptional activator protein EsaR (esaR) from Pantoea stewartii subsp. stewartii (Erwinia stewartii).